Here is a 487-residue protein sequence, read N- to C-terminus: MEDAESTTKDPVDRVEKVTWRDLQDGSFTAELKKLICFAAPMAAVVITQSMLQIITMVIVGHLGRLSLASASFAISFCNVTGFSFIMGLSCALDTLSGQAYGAKLYRKLGVQAYTAMFCLTLVCLPLSLLWFNMGKLLVILGQDPSIAHEAGRFAAWLIPGLFAYAVLQPLTRYFKNQSLITPLLITSCVVFCLHVPLCWLLVYKSGLDHIGGALALSLSYWLYAIFLGSFMYFSSACSETRAPLTMEIFEGVREFIKYALPSAAMLCLEWWSYELIILLSGLLPNPQLETSVLSVCLQTLSMTYSIPLAIAAAASTRISNELGAGNSRAAHIVVYAAMSLAVVDALMVGTSLLAGKNLLGQVFSSDKNTIDYVAKMAPLVSISLILDSLQGVLSGVASGCGWQHIGAYINFGAFYLWGIPIAASLAFWVHLKGVGLWIGIIAGAVLQTLLLALVTGCINWENQAREARKRMAVAHESELTESELPF.

Transmembrane regions (helical) follow at residues 35–55, 73–93, 122–142, 151–171, 184–204, 211–231, 264–284, 293–313, 330–350, 377–397, 412–432, and 435–455; these read LICF…LQII, FAIS…SCAL, LVCL…VILG, AGRF…LQPL, LLIT…LLVY, IGGA…LGSF, AAML…SGLL, VLSV…AIAA, AAHI…LMVG, MAPL…LSGV, FGAF…WVHL, and VGLW…LALV.

Belongs to the multi antimicrobial extrusion (MATE) (TC 2.A.66.1) family.

The protein localises to the membrane. This chain is Protein DETOXIFICATION 11, found in Arabidopsis thaliana (Mouse-ear cress).